The following is a 75-amino-acid chain: CDC42 small effector protein 2-B (75 aa).

Residues cysteine 10 and cysteine 11 are each lipidated (S-palmitoyl cysteine). The 14-residue stretch at 29-42 (IGEPMNFVHTAHVG) folds into the CRIB domain.

The protein belongs to the CDC42SE/SPEC family.

The protein localises to the cytoplasm. Its subcellular location is the cytoskeleton. It is found in the cell membrane. Probably involved in the organization of the actin cytoskeleton by acting downstream of CDC42, inducing actin filament assembly. The polypeptide is CDC42 small effector protein 2-B (cdc42se2-b) (Xenopus laevis (African clawed frog)).